The following is a 338-amino-acid chain: MTKQKIAVLGPGSWGTALAQVLNDNGHEVRLWGNVVEQIEEINTSHTNQRYFKDITLDSKIKAYTNLEEAINNVDSILFVVPTKVTRLVAKQVANLLKHKVVIMHASKGLEPGTHERLSTILEEEISEQYRSDIVVVSGPSHAEEAIVRDITLITAASKDIGAAKYVQKLFSNHYFRLYTNTDVVGVETAGALKNIIAVGAGALHGLGYGDNAKAAIITRGLAEITRLGVQLGADPLTFSGLSGVGDLIVTGTSVHSRNWRAGDALGRGEKLEDIEKNMGMVIEGISTTKVAYEIAQNLNVYMPITEAIYKSIYEGANIKDSILDMMSNEFRSENEWH.

NADPH contacts are provided by Ser-13, Trp-14, and Lys-108. Lys-108, Gly-139, and Ser-141 together coordinate sn-glycerol 3-phosphate. Ala-143 lines the NADPH pocket. Sn-glycerol 3-phosphate-binding residues include Lys-194, Asp-247, Ser-257, Arg-258, and Asn-259. Lys-194 acts as the Proton acceptor in catalysis. Arg-258 lines the NADPH pocket. Residues Val-282 and Glu-284 each coordinate NADPH.

It belongs to the NAD-dependent glycerol-3-phosphate dehydrogenase family.

Its subcellular location is the cytoplasm. The catalysed reaction is sn-glycerol 3-phosphate + NAD(+) = dihydroxyacetone phosphate + NADH + H(+). It carries out the reaction sn-glycerol 3-phosphate + NADP(+) = dihydroxyacetone phosphate + NADPH + H(+). It functions in the pathway membrane lipid metabolism; glycerophospholipid metabolism. In terms of biological role, catalyzes the reduction of the glycolytic intermediate dihydroxyacetone phosphate (DHAP) to sn-glycerol 3-phosphate (G3P), the key precursor for phospholipid synthesis. This chain is Glycerol-3-phosphate dehydrogenase [NAD(P)+], found in Streptococcus agalactiae serotype III (strain NEM316).